A 591-amino-acid chain; its full sequence is L-fucose isomerase (591 aa).

Active-site proton acceptor residues include Glu-337 and Asp-361. Positions 337, 361, and 528 each coordinate Mn(2+).

This sequence belongs to the L-fucose isomerase family. Homohexamer. Requires Mn(2+) as cofactor.

It localises to the cytoplasm. The catalysed reaction is L-fucose = L-fuculose. It participates in carbohydrate degradation; L-fucose degradation; L-lactaldehyde and glycerone phosphate from L-fucose: step 1/3. Its function is as follows. Converts the aldose L-fucose into the corresponding ketose L-fuculose. The sequence is that of L-fucose isomerase from Salmonella arizonae (strain ATCC BAA-731 / CDC346-86 / RSK2980).